We begin with the raw amino-acid sequence, 426 residues long: Glutamyl-tRNA reductase (426 aa).

Substrate is bound by residues 50–53 (TCNR), S108, 113–115 (EPQ), and Q119. The active-site Nucleophile is the C51. Residue 188–193 (GAGEMI) participates in NADP(+) binding.

The protein belongs to the glutamyl-tRNA reductase family. As to quaternary structure, homodimer.

It carries out the reaction (S)-4-amino-5-oxopentanoate + tRNA(Glu) + NADP(+) = L-glutamyl-tRNA(Glu) + NADPH + H(+). It functions in the pathway porphyrin-containing compound metabolism; protoporphyrin-IX biosynthesis; 5-aminolevulinate from L-glutamyl-tRNA(Glu): step 1/2. Its function is as follows. Catalyzes the NADPH-dependent reduction of glutamyl-tRNA(Glu) to glutamate 1-semialdehyde (GSA). This is Glutamyl-tRNA reductase from Polaromonas sp. (strain JS666 / ATCC BAA-500).